The chain runs to 507 residues: E3 ubiquitin-protein ligase TRIM31 (507 aa).

The RING-type zinc finger occupies 16–56; that stretch reads CPICMEILQDPVTIDCGHNFCLQCISQVGKTSEKIQCPLCK. The B box-type zinc-finger motif lies at 89–130; sequence KEDSRCQRHKEKLHYFCEQDGAFLCVVCRDSKDHKSHNVTLI. Positions 94, 97, 116, and 122 each coordinate Zn(2+). Coiled coils occupy residues 176–241 and 269–298; these read EKLK…LQSS and EDLEKKCSEAKARHESIIKTLTELKDDMNA. Residues 315–507 form the B30.2/SPRY domain; the sequence is EKESWSLLQK…VACSHITLSP (193 aa).

Belongs to the TRIM/RBCC family. In terms of assembly, may form oligomers. Interacts with isoform p52shc of SHC1. Post-translationally, auto-ubiquitinated (in vitro). In terms of tissue distribution, highly expressed in the gastrointestrinal tract, with high expression in the small intestine, moderate in the large intestine and weak in the stomach and esophagus.

It localises to the cytoplasm. Its subcellular location is the mitochondrion. It catalyses the reaction S-ubiquitinyl-[E2 ubiquitin-conjugating enzyme]-L-cysteine + [acceptor protein]-L-lysine = [E2 ubiquitin-conjugating enzyme]-L-cysteine + N(6)-ubiquitinyl-[acceptor protein]-L-lysine.. It functions in the pathway protein modification; protein ubiquitination. In terms of biological role, E3 ubiquitin-protein ligase that acts as a regulator of antiviral immune response and inflammation by mediating ubiquitination of substrates. Acts as a regulator of innate immune defense against viruses by mediating 'Lys-63'-linked ubiquitination of MAVS, promoting MAVS polymerization and formation of three-stranded helical filaments on mitochondria. Acts as a negative regulator of the NLRP3 inflammasome by catalyzing 'Lys-48'-linked ubiquitination of NLRP3, leading to its degradation. Regulator of Src-induced anchorage independent cell growth. The protein is E3 ubiquitin-protein ligase TRIM31 of Mus musculus (Mouse).